The primary structure comprises 32 residues: NRNNRDWWHFADYGCYCGYGGSGTPVDELDRC.

Y16, G18, and G20 together coordinate Ca(2+).

The cofactor is Ca(2+). In terms of tissue distribution, expressed by the venom gland.

Its subcellular location is the secreted. The enzyme catalyses a 1,2-diacyl-sn-glycero-3-phosphocholine + H2O = a 1-acyl-sn-glycero-3-phosphocholine + a fatty acid + H(+). Its function is as follows. PLA2 catalyzes the calcium-dependent hydrolysis of the 2-acyl groups in 3-sn-phosphoglycerides. The protein is Phospholipase A2 of Micrurus lemniscatus (South American coral snake).